A 119-amino-acid polypeptide reads, in one-letter code: Large ribosomal subunit protein bL12 (119 aa).

The protein belongs to the bacterial ribosomal protein bL12 family. Homodimer. Part of the ribosomal stalk of the 50S ribosomal subunit. Forms a multimeric L10(L12)X complex, where L10 forms an elongated spine to which 2 to 4 L12 dimers bind in a sequential fashion. Binds GTP-bound translation factors.

Its function is as follows. Forms part of the ribosomal stalk which helps the ribosome interact with GTP-bound translation factors. Is thus essential for accurate translation. The chain is Large ribosomal subunit protein bL12 from Colwellia psychrerythraea (strain 34H / ATCC BAA-681) (Vibrio psychroerythus).